The sequence spans 427 residues: Dihydroorotase (427 aa).

Zn(2+)-binding residues include His60 and His62. Substrate contacts are provided by residues 62 to 64 (HLR) and Asn94. The Zn(2+) site is built by Asp151, His178, and His231. Residue Asn277 coordinates substrate. Asp304 is a Zn(2+) binding site. The active site involves Asp304. Substrate is bound by residues His308 and 322 to 323 (FG).

It belongs to the metallo-dependent hydrolases superfamily. DHOase family. Class I DHOase subfamily. Zn(2+) is required as a cofactor.

It carries out the reaction (S)-dihydroorotate + H2O = N-carbamoyl-L-aspartate + H(+). The protein operates within pyrimidine metabolism; UMP biosynthesis via de novo pathway; (S)-dihydroorotate from bicarbonate: step 3/3. In terms of biological role, catalyzes the reversible cyclization of carbamoyl aspartate to dihydroorotate. In Pelotomaculum thermopropionicum (strain DSM 13744 / JCM 10971 / SI), this protein is Dihydroorotase.